We begin with the raw amino-acid sequence, 45 residues long: Large ribosomal subunit protein bL34c (45 aa).

The disordered stretch occupies residues 1 to 21 (MIQRTLTGTNRKKTKRSGFRS). The span at 10-19 (NRKKTKRSGF) shows a compositional bias: basic residues.

The protein belongs to the bacterial ribosomal protein bL34 family.

The protein localises to the plastid. The protein resides in the chloroplast. The chain is Large ribosomal subunit protein bL34c (rpl34) from Cyanidium caldarium (Red alga).